The primary structure comprises 417 residues: Pygopus homolog 1 (417 aa).

The segment covering Met1–Ala11 has biased composition (basic and acidic residues). Disordered regions lie at residues Met1–Pro71, His175–Pro265, and Glu284–Asp318. A compositionally biased stretch (gly residues) spans Gly18–Gly27. The Nuclear localization signal motif lies at Pro35–Lys41. 3 stretches are compositionally biased toward polar residues: residues Ser180–Ser221, Asp240–His256, and Glu284–Pro305. Residues Val338–Asp396 form a PHD-type zinc finger. The interaction with H3K4me2 stretch occupies residues Tyr339–Ala386. Residues Gly371–Gly389 form an interaction with BCL9 region.

In terms of assembly, interacts with BCL9 via The PHD-type zinc finger motiv, and thereby becomes part of the nuclear beta-catenin/TCF complex. Found in a complex with BCL9L, CDC73, CTNNB1 and PYGO1. Interacts with histone H3 mono-, di- or tri-methylated at 'Lys4' (H3K4me1, H3K4me2, H3K4me3); the interaction is enhanced by the interaction with BCL9.

It is found in the nucleus. Its function is as follows. Involved in signal transduction through the Wnt pathway. This is Pygopus homolog 1 (Pygo1) from Mus musculus (Mouse).